The following is a 630-amino-acid chain: Replication protein A 70 kDa DNA-binding subunit B (630 aa).

Residues 200 to 282 (IIKVRVTSKG…KTVHNDYEMT (83 aa)) constitute a DNA-binding region (OB). Residues 496-516 (CKTCNKKVTEAIGSGYWCEGC) form a C4-type zinc finger.

It belongs to the replication factor A protein 1 family. Heterotrimer of RPA1, RPA2 and RPA3 (canonical replication protein A complex). Interacts with RPA2A. As to expression, expressed in root tips, roots, shoot apical meristem (SAM) and young leaves, and at lower levels in mature leaves, flag leaves and ears.

It is found in the nucleus. Its function is as follows. Component of the replication protein A complex (RPA) required for DNA recombination, repair and replication. The activity of RPA is mediated by single-stranded DNA binding and protein interactions. Probably involved in repair of double-strand DNA breaks (DSBs) induced by genotoxic stresses. This is Replication protein A 70 kDa DNA-binding subunit B (RPA1B) from Oryza sativa subsp. japonica (Rice).